The chain runs to 574 residues: Developmental and secondary metabolism regulator veA (574 aa).

4 disordered regions span residues 1–22 (MATR…SRIT), 39–60 (ERAR…VDPP), 255–500 (RSSD…GAGK), and 513–540 (RSYE…YPRR). One can recognise a Velvet domain in the interval 25-230 (GKKLTYKLNV…AEQGCRVRIR (206 aa)). The short motif at 39–44 (ERARAC) is the Nuclear localization signal element. Composition is skewed to pro residues over residues 314–323 (RPLPPAPGPA) and 330–341 (PAPPAPPAPPSH). Composition is skewed to polar residues over residues 343–353 (PGYQSHLSFGS), 385–394 (HARNPSTSAE), 406–415 (RMSTERSSYP), and 448–458 (VAQSAAPRSQT). Residues 457-501 (QTPSSSLVPSLPPLKALSGDYPNNLSQSSSSTSQSPSHDLGAGKK) form a PEST region. Low complexity-rich tracts occupy residues 459–474 (PSSS…KALS) and 482–493 (SQSSSSTSQSPS). Residues 513–525 (RSYEDSFGHDDRP) show a composition bias toward basic and acidic residues.

This sequence belongs to the velvet family. VeA subfamily. Component of the heterotrimeric velvet complex composed of laeA, veA and velB; VeA acting as a bridging protein between laeA and velB.

It is found in the nucleus. The protein localises to the cytoplasm. In terms of biological role, component of the velvet transcription factor complex that controls sexual/asexual developmental ratio in response to light, promoting sexual development in the darkness while stimulating asexual sporulation under illumination. The velvet complex hat acts as a global regulator for secondary metabolite gene expression. Controls the expression of the penicillin gene cluster. In Aspergillus oryzae (strain ATCC 42149 / RIB 40) (Yellow koji mold), this protein is Developmental and secondary metabolism regulator veA.